The chain runs to 232 residues: Large ribosomal subunit protein uL1 (232 aa).

The protein belongs to the universal ribosomal protein uL1 family. In terms of assembly, part of the 50S ribosomal subunit.

In terms of biological role, binds directly to 23S rRNA. The L1 stalk is quite mobile in the ribosome, and is involved in E site tRNA release. Protein L1 is also a translational repressor protein, it controls the translation of the L11 operon by binding to its mRNA. The protein is Large ribosomal subunit protein uL1 of Bacillus licheniformis (strain ATCC 14580 / DSM 13 / JCM 2505 / CCUG 7422 / NBRC 12200 / NCIMB 9375 / NCTC 10341 / NRRL NRS-1264 / Gibson 46).